Reading from the N-terminus, the 580-residue chain is Glutathione hydrolase proenzyme (580 aa).

Positions 1-25 (MIKPTFLRRVAIAALLSGSCFSAAA) are cleaved as a signal peptide. Arg114 is a binding site for L-glutamate. Thr391 functions as the Nucleophile in the catalytic mechanism. Residues Thr409, Asn411, Gln430, Asp433, 462 to 463 (SS), and 483 to 484 (GG) contribute to the L-glutamate site. Positions 561 to 580 (DGELYGASDPRSVDDLTAGY) are disordered.

Belongs to the gamma-glutamyltransferase family. This enzyme consists of two polypeptide chains, which are synthesized in precursor form from a single polypeptide. Cleaved by autocatalysis into a large and a small subunit.

The protein resides in the periplasm. The catalysed reaction is an N-terminal (5-L-glutamyl)-[peptide] + an alpha-amino acid = 5-L-glutamyl amino acid + an N-terminal L-alpha-aminoacyl-[peptide]. It catalyses the reaction glutathione + H2O = L-cysteinylglycine + L-glutamate. It carries out the reaction an S-substituted glutathione + H2O = an S-substituted L-cysteinylglycine + L-glutamate. It functions in the pathway sulfur metabolism; glutathione metabolism. Transferase and hydrolase activities are inhibited by L-Ala and L-Gln, and also by GGT affinity labeling reagents such as azaserine and 6-diazo-5-oxo-nor-leucine. Functionally, cleaves the gamma-glutamyl bond of periplasmic glutathione (gamma-Glu-Cys-Gly), glutathione conjugates, and other gamma-glutamyl compounds. The metabolism of glutathione releases free glutamate and the dipeptide cysteinyl-glycine, which is hydrolyzed to cysteine and glycine by dipeptidases; it may function in amino acid uptake/salvage, or possibly in peptidoglycan linkage. Catalyzes the hydrolysis and transpeptidation of many gamma-glutamyl compounds (including some D-gamma-glutamyl substrates), with a preference for basic and aromatic amino acids as acceptors. The KM values for gamma-glutamyl acceptors are so high that it has been proposed transpeptidation is not the physiological role in E.coli. The polypeptide is Glutathione hydrolase proenzyme (ggt) (Escherichia coli (strain K12)).